The following is a 75-amino-acid chain: Rugosin-LK1 (75 aa).

Positions 1-22 (MFTMKKSLLFLFFLGTISLSFC) are cleaved as a signal peptide. A propeptide spanning residues 23 to 40 (EEERSADEDDEGEMTEEE) is cleaved from the precursor.

As to expression, expressed by the skin glands.

The protein resides in the secreted. In terms of biological role, has antimicrobial activity against Gram-positive bacteria S.aureus ATCC 2592 (MIC=10.0 uM), S.aureus ATCC 43300 (MIC=15.0 uM) and B.subtilis (MIC=40.0 uM), against Gram-negative bacteria E.coli ML-35P (MIC=10.0 uM), P.aeruginosa PA01 (MIC=5.0 uM) and P.aeruginosa ATCC 27853 (MIC=5.0 uM) and against fungus C.albicans ATCC 2002 (MIC=10.0 uM). In Limnonectes kuhlii (Kuhl's Creek frog), this protein is Rugosin-LK1.